A 251-amino-acid polypeptide reads, in one-letter code: MEVCGEPLIRAAPEPLRDERIQTAELLCADLDLSVSLTPERPADRRRRQVRFNVDPVLITVNPEPRNNQPTARKPPNKDEHGVETDREQSRECDGQQTHEAELNTTLALRAELEEEAEQTFDAEKAVREKLQSSTLTKNHVNSKAAEGLNFPRSQQLYRALVSVSLSRDQLISQALQDRPALAPPTASQNNKFSSPPPEGPDILQFYSPDKMLRETPLLPGDHIPLPRPRPVPRPAHTTFHLHRLHKLWES.

Disordered stretches follow at residues L58 to H99 and P180 to P235. Residues P76–H99 are compositionally biased toward basic and acidic residues.

The protein belongs to the PPP1R35 family.

The protein localises to the cytoplasm. It is found in the cytoskeleton. Its subcellular location is the microtubule organizing center. The protein resides in the centrosome. It localises to the centriole. Its function is as follows. During centriole duplication, may play a role in the centriole elongation by promoting the recruitment of the microtubule-binding elongation machinery, leading to the centriole to centrosome conversion. In addition may play a role in the primary cilia assembly. The sequence is that of Protein phosphatase 1 regulatory subunit 35 from Danio rerio (Zebrafish).